A 171-amino-acid chain; its full sequence is UPF0398 protein MGAS10270_Spy1470 (171 aa).

The protein belongs to the UPF0398 family.

In Streptococcus pyogenes serotype M2 (strain MGAS10270), this protein is UPF0398 protein MGAS10270_Spy1470.